Here is a 305-residue protein sequence, read N- to C-terminus: Spermatogenesis-associated protein 4 (305 aa).

The 107-residue stretch at 49–155 (SRLSRSVLRW…EEVYTLLTHR (107 aa)) folds into the Calponin-homology (CH) domain.

In terms of tissue distribution, highly expressed in testis, the expression is observed precisely in seminiferous tubules.

The protein resides in the nucleus. Functionally, may play a role in apoptosis regulation. The protein is Spermatogenesis-associated protein 4 (SPATA4) of Homo sapiens (Human).